A 1201-amino-acid chain; its full sequence is ATP-dependent helicase/deoxyribonuclease subunit B (1201 aa).

The protein belongs to the helicase family. AddB/RexB type 2 subfamily. As to quaternary structure, heterodimer of AddA and RexB. The cofactor is Mg(2+).

In terms of biological role, the heterodimer acts as both an ATP-dependent DNA helicase and an ATP-dependent, dual-direction single-stranded exonuclease. Recognizes the chi site generating a DNA molecule suitable for the initiation of homologous recombination. This subunit has 5' -&gt; 3' nuclease activity but not helicase activity. This Levilactobacillus brevis (strain ATCC 367 / BCRC 12310 / CIP 105137 / JCM 1170 / LMG 11437 / NCIMB 947 / NCTC 947) (Lactobacillus brevis) protein is ATP-dependent helicase/deoxyribonuclease subunit B.